Consider the following 445-residue polypeptide: Sporulation protein YkvU (445 aa).

Helical transmembrane passes span 7-29, 39-61, 82-104, 109-131, 144-166, 172-194, 237-259, 269-291, 312-334, 349-371, 376-395, and 400-422; these read GIIL…NMIL, GLYM…ELPI, AFRM…LPFI, TYHP…TSIA, IAIA…FQWY, MAVL…YLYS, VNAI…GTAA, VAVT…MIPS, IFIT…GPLT, LLWP…IGMG, AFYH…YVLG, and LQML…LHYA.

It is found in the forespore membrane. The polypeptide is Sporulation protein YkvU (ykvU) (Bacillus subtilis (strain 168)).